Consider the following 581-residue polypeptide: Adenine deaminase (581 aa).

Belongs to the metallo-dependent hydrolases superfamily. Adenine deaminase family. Mn(2+) serves as cofactor.

It carries out the reaction adenine + H2O + H(+) = hypoxanthine + NH4(+). The sequence is that of Adenine deaminase from Brucella abortus (strain 2308).